A 947-amino-acid polypeptide reads, in one-letter code: ATPase 10, plasma membrane-type (947 aa).

At M1–F69 the chain is on the cytoplasmic side. Residues L70 to I89 form a helical membrane-spanning segment. Topologically, residues A90 to W101 are extracellular. Residues E102 to E122 form a helical membrane-spanning segment. Over N123 to I251 the chain is Cytoplasmic. The chain crosses the membrane as a helical span at residues G252 to P272. Residues V273–G281 are Extracellular-facing. The helical transmembrane segment at I282–T299 threads the bilayer. Residues V300–R650 are Cytoplasmic-facing. The active-site 4-aspartylphosphate intermediate is the D337. 2 residues coordinate Mg(2+): D595 and D599. Residues N651 to L672 form a helical membrane-spanning segment. Residues I673–D677 are Extracellular-facing. The helical transmembrane segment at F678–D700 threads the bilayer. Topologically, residues R701–I716 are cytoplasmic. The helical transmembrane segment at F717–I737 threads the bilayer. The Extracellular portion of the chain corresponds to I738–E758. A helical membrane pass occupies residues Q759 to T779. The Cytoplasmic segment spans residues R780 to G791. A helical transmembrane segment spans residues T792 to A812. The Extracellular segment spans residues N813 to T820. Residues G821 to L841 form a helical membrane-spanning segment. Residues D842–V947 lie on the Cytoplasmic side of the membrane. S897 and S929 each carry phosphoserine. T946 is modified (phosphothreonine).

Belongs to the cation transport ATPase (P-type) (TC 3.A.3) family. Type IIIA subfamily. As to expression, found primarily in developing seeds. Expressed in guard cells, mesophyll cells, leaves and roots.

It localises to the membrane. The catalysed reaction is ATP + H2O + H(+)(in) = ADP + phosphate + 2 H(+)(out). In terms of biological role, the plasma membrane H(+) ATPase of plants and fungi generates a proton gradient that drives the active transport of nutrients by H(+)-symport. The resulting external acidification and/or internal alkinization may mediate growth responses. This is ATPase 10, plasma membrane-type (AHA10) from Arabidopsis thaliana (Mouse-ear cress).